Here is a 212-residue protein sequence, read N- to C-terminus: Nuclear phosphoprotein UL3 homolog (212 aa).

The protein belongs to the alphaherpesvirinae HHV-1 UL3 family. Post-translationally, phosphorylated.

Its subcellular location is the host nucleus. The sequence is that of Nuclear phosphoprotein UL3 homolog from Equus caballus (Horse).